The sequence spans 1003 residues: Phosphatidylinositol 4,5-bisphosphate 5-phosphatase A (1003 aa).

Disordered regions lie at residues 1–110 (MEGQ…AAKS) and 147–414 (AMPR…QPTC). Positions 6-11 (RSGSAR) match the RSXSXX motif 1 motif. The segment covering 11-24 (RPGTRTGLGPLPGT) has biased composition (low complexity). R56 bears the Asymmetric dimethylarginine; alternate mark. R56 carries the omega-N-methylarginine; alternate modification. R65 carries the post-translational modification Omega-N-methylarginine. R76 bears the Asymmetric dimethylarginine mark. The residue at position 83 (R83) is an Asymmetric dimethylarginine; alternate. R83 carries the post-translational modification Omega-N-methylarginine; alternate. Polar residues predominate over residues 160–174 (LTPTSRDQKQLSPTS). S171 is subject to Phosphoserine. A compositionally biased stretch (low complexity) spans 180–196 (ALATSGLSLALASQEQP). The segment covering 197 to 210 (PQSPSSPSPVPSPV) has biased composition (pro residues). Basic and acidic residues predominate over residues 284–294 (ARPEAPRHSPE). A phosphoserine mark is found at S292 and S325. Positions 338–348 (VPPPLPKPPRS) are enriched in pro residues. Positions 346 to 351 (PRSPSR) match the SH3-binding motif. Composition is skewed to low complexity over residues 349–361 (PSRSPSRSPNRSP) and 390–413 (QAQESPAAATTTTSPTSSWSAQPT). The short motif at 351-356 (RSPSRS) is the RSXSXX motif 2 element. Residues 422 to 725 (ITVVTWNVGT…SDHKPVAAQF (304 aa)) form a catalytic region. A required for ruffle localization region spans residues 726–837 (ILQFAFRDDV…IGVTEPFQIS (112 aa)). A disordered region spans residues 839–1003 (PTSESASSST…LGLEEGGLGP (165 aa)). The segment covering 840–855 (TSESASSSTDSSGTSS) has biased composition (low complexity). 2 consecutive short sequence motifs (RSXSXX motif) follow at residues 871 to 876 (RSPSPG) and 882 to 887 (RSRSPG). Position 900 is a phosphoserine (S900). Composition is skewed to low complexity over residues 907–919 (SRSPSPQSRQLPR) and 927–943 (SSSSRGSSEEGPSGLPG). The RSXSXX motif 5 motif lies at 908–913 (RSPSPQ). At S987 the chain carries Phosphoserine.

The protein belongs to the inositol 1,4,5-trisphosphate 5-phosphatase type II family.

The protein localises to the cytoplasm. It catalyses the reaction 1D-myo-inositol 1,4,5-trisphosphate + H2O = 1D-myo-inositol 1,4-bisphosphate + phosphate. It carries out the reaction 1D-myo-inositol 1,3,4,5-tetrakisphosphate + H2O = 1D-myo-inositol 1,3,4-trisphosphate + phosphate. The enzyme catalyses a 1,2-diacyl-sn-glycero-3-phospho-(1D-myo-inositol-4,5-bisphosphate) + H2O = a 1,2-diacyl-sn-glycero-3-phospho-(1D-myo-inositol 4-phosphate) + phosphate. In terms of biological role, inositol 5-phosphatase, which converts inositol 1,4,5-trisphosphate to inositol 1,4-bisphosphate. Also converts phosphatidylinositol 4,5-bisphosphate to phosphatidylinositol 4-phosphate and inositol 1,3,4,5-tetrakisphosphate to inositol 1,3,4-trisphosphate in vitro. May be involved in modulation of the function of inositol and phosphatidylinositol polyphosphate-binding proteins that are present at membranes ruffles. The polypeptide is Phosphatidylinositol 4,5-bisphosphate 5-phosphatase A (Inpp5j) (Mus musculus (Mouse)).